The chain runs to 57 residues: uncharacterized protein (57 aa).

The helical transmembrane segment at 34–54 (AALLDAAALVVIPGLLTVAAV) threads the bilayer.

Its subcellular location is the membrane. This is an uncharacterized protein from Dictyostelium discoideum (Social amoeba).